We begin with the raw amino-acid sequence, 444 residues long: Na(+)-translocating NADH-quinone reductase subunit A (444 aa).

This sequence belongs to the NqrA family. As to quaternary structure, composed of six subunits; NqrA, NqrB, NqrC, NqrD, NqrE and NqrF.

It catalyses the reaction a ubiquinone + n Na(+)(in) + NADH + H(+) = a ubiquinol + n Na(+)(out) + NAD(+). In terms of biological role, NQR complex catalyzes the reduction of ubiquinone-1 to ubiquinol by two successive reactions, coupled with the transport of Na(+) ions from the cytoplasm to the periplasm. NqrA to NqrE are probably involved in the second step, the conversion of ubisemiquinone to ubiquinol. The protein is Na(+)-translocating NADH-quinone reductase subunit A of Shewanella denitrificans (strain OS217 / ATCC BAA-1090 / DSM 15013).